The following is an 85-amino-acid chain: Beta-toxin BmKAS (85 aa).

The signal sequence occupies residues 1–19; the sequence is MKTVIFLIVSSLLLIGVKT. Positions 20-82 constitute an LCN-type CS-alpha/beta domain; the sequence is DNGYLLDKYT…LWNYNTNKCN (63 aa). 4 cysteine pairs are disulfide-bonded: cysteine 31/cysteine 81, cysteine 35/cysteine 56, cysteine 42/cysteine 63, and cysteine 46/cysteine 65.

Expressed by the venom gland.

Its subcellular location is the secreted. Beta toxins bind voltage-independently at site-4 of sodium channels (Nav) and shift the voltage of activation toward more negative potentials thereby affecting sodium channel activation and promoting spontaneous and repetitive firing. It binds to distinct receptor sites of mammal and insect voltage-gated sodium channels. It displays antinociceptive effect in rat models, which is due to its specific modulation of sodium channels of sensory neurons. It also significantly stimulates the binding of [3H]-ryanodine to ryanodine receptors on the sarcoplasmic reticulum of the skeletal muscle through an indirect mechanism. And it promotes noradrenaline release from the rat hippocampus slice. The chain is Beta-toxin BmKAS from Olivierus martensii (Manchurian scorpion).